Consider the following 487-residue polypeptide: Sensor protein CopS (487 aa).

At 1–9 the chain is on the periplasmic side; it reads MKPGSLTLR. A helical membrane pass occupies residues 10 to 30; it reads LSLLFVVAVAAVLIIVGVAFN. Residues 31–136 are Cytoplasmic-facing; that stretch reads ELSRHHFRAL…TASVSLPTAS (106 aa). A helical transmembrane segment spans residues 137 to 157; it reads PPLTAWLVLDVTTHMHFFAML. Residues 158–159 are Periplasmic-facing; sequence ER. A helical membrane pass occupies residues 160-180; it reads WFWGVLLASTVLSAALGWLVA. Positions 181 to 234 constitute an HAMP domain; it reads KNGLRPVARVTQTAASMSAGSLKERIPLEPVPDELRALITAFNSMLGRLDDSFM. Topologically, residues 181 to 487 are cytoplasmic; sequence KNGLRPVARV…EHETGCHCAG (307 aa). A Histidine kinase domain is found at 242–455; the sequence is DIAHELRTPI…LHPHLHAIAC (214 aa). Phosphohistidine; by autocatalysis is present on H245.

It localises to the cell inner membrane. It carries out the reaction ATP + protein L-histidine = ADP + protein N-phospho-L-histidine.. Member of the two-component regulatory system CopS/CopR. Involved in the activation of copper resistance gene operon copABCD. Specifically recognizes or transduces a signal only in response to copper. This would lead to phosphorylation of CopR in the cytoplasm. CopS/CopR may also regulate chromosomally encoded genes. May also be involved in basic copper metabolism. This Pseudomonas syringae pv. tomato protein is Sensor protein CopS (copS).